An 84-amino-acid polypeptide reads, in one-letter code: Polyketide-8 synthase acyl carrier protein 1 (84 aa).

In terms of domain architecture, Carrier spans 7–82; it reads AARKQEIKEI…GVYVVVSEAA (76 aa). Position 42 is an O-(pantetheine 4'-phosphoryl)serine (serine 42).

In terms of processing, 4'-phosphopantetheine is transferred from CoA to a specific serine of the apo-ACP-like protein.

Its function is as follows. Acyl carrier protein. This is Polyketide-8 synthase acyl carrier protein 1 from Streptomyces avermitilis (strain ATCC 31267 / DSM 46492 / JCM 5070 / NBRC 14893 / NCIMB 12804 / NRRL 8165 / MA-4680).